The primary structure comprises 120 residues: Movement protein TGB2 (120 aa).

Residues 1–16 are Cytoplasmic-facing; it reads MSSTSEPTYQLAPPDS. A helical transmembrane segment spans residues 17–37; sequence LKQVYLTLAAGFAVGLGIFLL. The Lumenal portion of the chain corresponds to 38-76; the sequence is RTNTLPHTGDNIHHLPHGGCYRDGTKSIRYNSPGVATSS. The helical transmembrane segment at 77–97 threads the bilayer; it reads NIFLPAVAVLCILALLHVPFF. The Cytoplasmic segment spans residues 98 to 120; it reads QPDRVRRRCCRFYWCADPHHPTV.

It belongs to the Tymovirales TGBp2 protein family.

The protein localises to the host endoplasmic reticulum membrane. Functionally, plays a role in viral cell-to-cell propagation, by facilitating genome transport to neighboring plant cells through plasmosdesmata,. The sequence is that of Movement protein TGB2 (ORF3) from Lolium latent virus (isolate Lolium/USA/US1/-) (LoLV).